The primary structure comprises 299 residues: Diaminopimelate epimerase (299 aa).

Substrate contacts are provided by N13, Q46, and N66. The active-site Proton donor is the C75. Substrate-binding positions include 76-77 (GN), N166, N199, and 217-218 (ER). C226 serves as the catalytic Proton acceptor. 227–228 (GT) serves as a coordination point for substrate.

It belongs to the diaminopimelate epimerase family. As to quaternary structure, homodimer.

It is found in the cytoplasm. It carries out the reaction (2S,6S)-2,6-diaminopimelate = meso-2,6-diaminopimelate. The protein operates within amino-acid biosynthesis; L-lysine biosynthesis via DAP pathway; DL-2,6-diaminopimelate from LL-2,6-diaminopimelate: step 1/1. In terms of biological role, catalyzes the stereoinversion of LL-2,6-diaminopimelate (L,L-DAP) to meso-diaminopimelate (meso-DAP), a precursor of L-lysine and an essential component of the bacterial peptidoglycan. The chain is Diaminopimelate epimerase from Paraburkholderia phytofirmans (strain DSM 17436 / LMG 22146 / PsJN) (Burkholderia phytofirmans).